Here is a 359-residue protein sequence, read N- to C-terminus: Insulin gene enhancer protein ISL-2 (359 aa).

2 consecutive LIM zinc-binding domains span residues 25-86 and 87-149; these read AMCV…RLFG and IKCA…LLER. Positions 151–191 are disordered; it reads AAGSPRSPGPLPGARGLHLPDAGSGRQPALRPHVHKQTEKT. Residues serine 154 and serine 157 each carry the phosphoserine modification. Residues 191–250 constitute a DNA-binding region (homeobox); the sequence is TTRVRTVLNEKQLHTLRTCYAANPRPDALMKEQLVEMTGLSPRVIRVWFQNKRCKDKKKS. Residues 272 to 301 form an LIM-binding domain (LID) region; the sequence is GTPLVAGSPIRHENAVQGSAVEVQTYQPPW. Serine 279 is modified (phosphoserine). A compositionally biased stretch (low complexity) spans 326–336; it reads ESGSLGNSSGS. The segment at 326–359 is disordered; the sequence is ESGSLGNSSGSDVTSLSSQLPDTPNSMVPSPVET. Over residues 337-359 the composition is skewed to polar residues; sequence DVTSLSSQLPDTPNSMVPSPVET.

Interacts with LHX4.

The protein localises to the nucleus. Transcriptional factor that defines subclasses of motoneurons that segregate into columns in the spinal cord and select distinct axon pathways. The chain is Insulin gene enhancer protein ISL-2 (ISL2) from Homo sapiens (Human).